We begin with the raw amino-acid sequence, 173 residues long: Alkyl hydroperoxide reductase AhpD (173 aa).

Residue Cys131 is the Proton donor of the active site. Cys131 and Cys134 form a disulfide bridge. Residue Cys134 is the Cysteine sulfenic acid (-SOH) intermediate of the active site.

Belongs to the AhpD family.

It catalyses the reaction N(6)-[(R)-dihydrolipoyl]-L-lysyl-[lipoyl-carrier protein] + a hydroperoxide = N(6)-[(R)-lipoyl]-L-lysyl-[lipoyl-carrier protein] + an alcohol + H2O. Functionally, antioxidant protein with alkyl hydroperoxidase activity. Required for the reduction of the AhpC active site cysteine residues and for the regeneration of the AhpC enzyme activity. This chain is Alkyl hydroperoxide reductase AhpD, found in Maricaulis maris (strain MCS10) (Caulobacter maris).